The following is a 130-amino-acid chain: Holo-[acyl-carrier-protein] synthase (130 aa).

Residues Asp8 and Glu62 each contribute to the Mg(2+) site.

This sequence belongs to the P-Pant transferase superfamily. AcpS family. It depends on Mg(2+) as a cofactor.

Its subcellular location is the cytoplasm. The catalysed reaction is apo-[ACP] + CoA = holo-[ACP] + adenosine 3',5'-bisphosphate + H(+). Its function is as follows. Transfers the 4'-phosphopantetheine moiety from coenzyme A to a Ser of acyl-carrier-protein. This is Holo-[acyl-carrier-protein] synthase from Herminiimonas arsenicoxydans.